We begin with the raw amino-acid sequence, 321 residues long: Aspartate carbamoyltransferase catalytic subunit (321 aa).

2 residues coordinate carbamoyl phosphate: arginine 70 and threonine 71. Residue lysine 98 participates in L-aspartate binding. The carbamoyl phosphate site is built by arginine 120, histidine 148, and glutamine 151. L-aspartate-binding residues include arginine 181 and arginine 235. The carbamoyl phosphate site is built by glycine 276 and proline 277.

This sequence belongs to the aspartate/ornithine carbamoyltransferase superfamily. ATCase family. As to quaternary structure, heterododecamer (2C3:3R2) of six catalytic PyrB chains organized as two trimers (C3), and six regulatory PyrI chains organized as three dimers (R2).

The enzyme catalyses carbamoyl phosphate + L-aspartate = N-carbamoyl-L-aspartate + phosphate + H(+). It functions in the pathway pyrimidine metabolism; UMP biosynthesis via de novo pathway; (S)-dihydroorotate from bicarbonate: step 2/3. Catalyzes the condensation of carbamoyl phosphate and aspartate to form carbamoyl aspartate and inorganic phosphate, the committed step in the de novo pyrimidine nucleotide biosynthesis pathway. The sequence is that of Aspartate carbamoyltransferase catalytic subunit from Gluconacetobacter diazotrophicus (strain ATCC 49037 / DSM 5601 / CCUG 37298 / CIP 103539 / LMG 7603 / PAl5).